A 381-amino-acid polypeptide reads, in one-letter code: 1-deoxy-D-xylulose 5-phosphate reductoisomerase (381 aa).

Positions 10, 11, 12, 13, and 120 each coordinate NADPH. Lys121 is a 1-deoxy-D-xylulose 5-phosphate binding site. Residue Glu122 participates in NADPH binding. Asp146 lines the Mn(2+) pocket. Positions 147, 148, 172, and 195 each coordinate 1-deoxy-D-xylulose 5-phosphate. Glu148 provides a ligand contact to Mn(2+). Gly201 serves as a coordination point for NADPH. 4 residues coordinate 1-deoxy-D-xylulose 5-phosphate: Ser208, Asn213, Lys214, and Glu217. Glu217 contributes to the Mn(2+) binding site.

This sequence belongs to the DXR family. Mg(2+) serves as cofactor. It depends on Mn(2+) as a cofactor.

It carries out the reaction 2-C-methyl-D-erythritol 4-phosphate + NADP(+) = 1-deoxy-D-xylulose 5-phosphate + NADPH + H(+). The protein operates within isoprenoid biosynthesis; isopentenyl diphosphate biosynthesis via DXP pathway; isopentenyl diphosphate from 1-deoxy-D-xylulose 5-phosphate: step 1/6. In terms of biological role, catalyzes the NADPH-dependent rearrangement and reduction of 1-deoxy-D-xylulose-5-phosphate (DXP) to 2-C-methyl-D-erythritol 4-phosphate (MEP). The sequence is that of 1-deoxy-D-xylulose 5-phosphate reductoisomerase from Thermodesulfovibrio yellowstonii (strain ATCC 51303 / DSM 11347 / YP87).